The sequence spans 215 residues: Probable transaldolase (215 aa).

The active-site Schiff-base intermediate with substrate is Lys-83.

It belongs to the transaldolase family. Type 3B subfamily.

It is found in the cytoplasm. The enzyme catalyses D-sedoheptulose 7-phosphate + D-glyceraldehyde 3-phosphate = D-erythrose 4-phosphate + beta-D-fructose 6-phosphate. It functions in the pathway carbohydrate degradation; pentose phosphate pathway; D-glyceraldehyde 3-phosphate and beta-D-fructose 6-phosphate from D-ribose 5-phosphate and D-xylulose 5-phosphate (non-oxidative stage): step 2/3. In terms of biological role, transaldolase is important for the balance of metabolites in the pentose-phosphate pathway. In Methanococcus maripaludis (strain DSM 14266 / JCM 13030 / NBRC 101832 / S2 / LL), this protein is Probable transaldolase.